A 392-amino-acid chain; its full sequence is MSKKFTKAVLSAAMAGVLFGVSFDIMAAEQSYSALNAQNGAGSIYKVYYNPDNKTAHIDWGGLGDVEKERNKPIPLLSKIDGNGNVTITSADGSTTFTVYDKEVHDFMKAAASGKTDDIKTNLLTEQNIRDLYNRVSAIQQMETNVGLDEYGNVAVTPNEIKERVSLQRYLAWESANSTIVANELEAQKGKLDAQKGELEAQKKNLGELTTRTDKIDAAAAATAAKVESRTLVGVSSDGTLTRAEGAKNTISVNDGLVALSGRTDRIDAAVGAIDGRVTRNTQSIEKNSKAIAANTRTLQQHSARLDSQQRQINENHKEMKRAAAQSAALTGLFQPYSVGKFNASAAVGGYSDEQALAVGVGYRFNEQTAAKAGVAFSDGDASWNVGVNFEF.

An N-terminal signal peptide occupies residues 1–27; the sequence is MSKKFTKAVLSAAMAGVLFGVSFDIMA. Residues 28-301 are surface exposed passenger domain; it reads AEQSYSALNA…IAANTRTLQQ (274 aa). Over 28-341 the chain is Extracellular; the sequence is AEQSYSALNA…GLFQPYSVGK (314 aa). Residues 174 to 215 are a coiled coil; that stretch reads ESANSTIVANELEAQKGKLDAQKGELEAQKKNLGELTTRTDK. Positions 187–230 are right-handed coiled-coil (RHcc); the sequence is AQKGKLDAQKGELEAQKKNLGELTTRTDKIDAAAAATAAKVESR. The segment at 231–256 is saddle domain; it reads TLVGVSSDGTLTRAEGAKNTISVNDG. The tract at residues 257–322 is left-handed coiled-coil (LHcc); it reads LVALSGRTDR…INENHKEMKR (66 aa). The segment at 299–341 is outer membrane translocation of the passenger domain; it reads LQQHSARLDSQQRQINENHKEMKRAAAQSAALTGLFQPYSVGK. The next 4 beta stranded transmembrane spans lie at 342–352, 355–366, 369–378, and 382–392; these read FNASAAVGGYS, QALAVGVGYRFN, TAAKAGVAFS, and ASWNVGVNFEF. Residues 342-392 form a translocator domain region; that stretch reads FNASAAVGGYSDEQALAVGVGYRFNEQTAAKAGVAFSDGDASWNVGVNFEF.

It belongs to the autotransporter-2 (AT-2) (TC 1.B.40) family. Eib subfamily. As to quaternary structure, homotrimer; can probably form mixed heterotrimers in vivo. Will form mixed heterotrimers with EibD; these are correctly located in the outer membrane and bind IgG Fc, although less well than homotrimers. Does not form trimers with distantly related YadA from Y.enterocolitica; coexpression was lethal and one of the genes is eliminated in vivo. If the full translocator domain (299-392) is exchanged with that of YadA ('368-455'), will form heterotrimers with YadA and vice-versa. In denaturing gels runs as 2 bands of about 121 and 131 kDa; extracting the sample with 88% phenol at 70 degrees Celsius reduces part of the signal to about 45 kDa. Binds the Fc portion of IgG; binds more than 1 Fc per subunit.

The protein resides in the cell surface. It is found in the cell outer membrane. Its function is as follows. Binds (in a non-immune fashion) to the Fc portion of human IgG but not IgA; binding occurs on the cell surface. Confers the ability to survive exposure to human serum exposure. Binds to the Fc portion of human IgG and to whole mouse antibodies also via Fc, binds more than 1 Fc or IgG. This chain is Immunoglobulin-binding protein EibA, found in Escherichia coli.